Reading from the N-terminus, the 422-residue chain is Acylglycerol kinase, mitochondrial (422 aa).

Position 6 is an N6-acetyllysine (lysine 6). Residues threonine 15–glycine 31 are hydrophobic. The DAGKc domain occupies alanine 58 to lysine 199. Residues glutamine 249–glutamine 271 are disordered.

This sequence belongs to the AGK family. In terms of assembly, component of the TIM22 complex, which core is composed of TIMM22, associated with TIMM10 (TIMM10A and/or TIMM10B), TIMM9, AGK and TIMM29. Interacts with SMIM26. It depends on Mg(2+) as a cofactor.

The protein localises to the mitochondrion inner membrane. It localises to the mitochondrion intermembrane space. It carries out the reaction a monoacylglycerol + ATP = a monoacyl-sn-glycero-3-phosphate + ADP + H(+). The catalysed reaction is a 1,2-diacyl-sn-glycerol + ATP = a 1,2-diacyl-sn-glycero-3-phosphate + ADP + H(+). It catalyses the reaction an N-acylsphing-4-enine + ATP = an N-acylsphing-4-enine 1-phosphate + ADP + H(+). The enzyme catalyses 1-(9Z-octadecenoyl)-sn-glycerol + ATP = 1-(9Z-octadecenoyl)-sn-glycero-3-phosphate + ADP + H(+). It carries out the reaction 1,2-di-(9Z-octadecenoyl)-sn-glycerol + ATP = 1,2-di-(9Z-octadecenoyl)-sn-glycero-3-phosphate + ADP + H(+). The catalysed reaction is a 1-acyl-sn-glycerol + ATP = a 1-acyl-sn-glycero-3-phosphate + ADP + H(+). It catalyses the reaction 1-hexadecanoyl-sn-glycerol + ATP = 1-hexadecanoyl-sn-glycero-3-phosphate + ADP + H(+). The enzyme catalyses a 2-acylglycerol + ATP = a 2-acyl-sn-glycerol 3-phosphate + ADP + H(+). It carries out the reaction 2-(5Z,8Z,11Z,14Z-eicosatetraenoyl)-glycerol + ATP = 2-(5Z,8Z,11Z,14Z-eicosatetraenoyl)-sn-glycero-3-phosphate + ADP + H(+). The catalysed reaction is 1-(5Z,8Z,11Z,14Z-eicosatetraenoyl)-sn-glycerol + ATP = 1-(5Z,8Z,11Z,14Z-eicosatetraenoyl)-sn-glycero-3-phosphate + ADP + H(+). It catalyses the reaction N-(hexanoyl)sphing-4-enine + ATP = N-hexanoylsphing-4-enine 1-phosphate + ADP + H(+). It participates in lipid metabolism; glycerolipid metabolism. Lipid kinase that can phosphorylate both monoacylglycerol and diacylglycerol to form lysophosphatidic acid (LPA) and phosphatidic acid (PA), respectively. Phosphorylates ceramide but not sphingosine. Phosphorylates 1,2-dioleoylglycerol more rapidly than 2,3-dioleoylglycerol. Independently of its lipid kinase activity, acts as a component of the TIM22 complex. The TIM22 complex mediates the import and insertion of multi-pass transmembrane proteins into the mitochondrial inner membrane by forming a twin-pore translocase that uses the membrane potential as the external driving force. In the TIM22 complex, required for the import of a subset of metabolite carriers into mitochondria, such as ANT1/SLC25A4 and SLC25A24, while it is not required for the import of TIMM23. Overexpression increases the formation and secretion of LPA, resulting in transactivation of EGFR and activation of the downstream MAPK signaling pathway, leading to increased cell growth. In Pongo abelii (Sumatran orangutan), this protein is Acylglycerol kinase, mitochondrial.